We begin with the raw amino-acid sequence, 415 residues long: Phosphoglycerate transport system transcriptional regulatory protein PgtA (415 aa).

The 115-residue stretch at 7–121 folds into the Response regulatory domain; sequence SILLIDDDVD…KLLILIEDAL (115 aa). 4-aspartylphosphate is present on Asp56. The Sigma-54 factor interaction domain occupies 142-341; it reads LIGRSEWMNQ…LANAAELFAV (200 aa). 170 to 177 serves as a coordination point for ATP; it reads GEHGTGRM. The H-T-H motif DNA-binding region spans 385–404; it reads INEVAEYLQIPRKKLYLRMK.

In terms of processing, phosphorylated by PgtB.

The protein resides in the cytoplasm. Functionally, member of the two-component regulatory system PgtB/PgtA that regulates the inducible phosphoglycerate transport system. When activated by PgtB it acts in conjunction with sigma-54 as a transcriptional activator. The protein is Phosphoglycerate transport system transcriptional regulatory protein PgtA (pgtA) of Salmonella typhimurium (strain LT2 / SGSC1412 / ATCC 700720).